A 380-amino-acid chain; its full sequence is Polygalacturonase 2 (380 aa).

Residues 1 to 20 (MIAGSKLLMLGLFGALAVHA) form the signal peptide. Positions 21 to 38 (LPEPAKAQVTAAPKLEER) are excised as a propeptide. Residues Cys-42 and Cys-60 are joined by a disulfide bond. PbH1 repeat units lie at residues 173 to 204 (ATDLTLSGITVDNRDGDTDEGGHNTDAFDVGS) and 205 to 226 (STGITITGATVYNQDDCLAVNS). Catalysis depends on Asp-219, which acts as the Proton donor. An intrachain disulfide couples Cys-221 to Cys-237. His-241 is an active-site residue. PbH1 repeat units lie at residues 256-277 (VANVIIENSQIQDSTNGVRIKT), 285-307 (VKNVTYKDITLSGITKYGIVIEQ), and 319-364 (TDGV…SVSG). Asn-287 carries N-linked (GlcNAc...) asparagine glycosylation. 2 disulfide bridges follow: Cys-347/Cys-352 and Cys-371/Cys-380.

Belongs to the glycosyl hydrolase 28 family.

The protein localises to the secreted. The catalysed reaction is (1,4-alpha-D-galacturonosyl)n+m + H2O = (1,4-alpha-D-galacturonosyl)n + (1,4-alpha-D-galacturonosyl)m.. This chain is Polygalacturonase 2 (PG2), found in Penicillium olsonii.